A 229-amino-acid chain; its full sequence is Potassium/proton antiporter CemA (229 aa).

The next 3 membrane-spanning stretches (helical) occupy residues 6–26 (AFIP…ISLC), 107–127 (ILHF…SFWG), and 189–209 (ILSG…KYWI).

The protein belongs to the CemA family.

It is found in the plastid. The protein localises to the chloroplast inner membrane. The catalysed reaction is K(+)(in) + H(+)(out) = K(+)(out) + H(+)(in). In terms of biological role, contributes to K(+)/H(+) antiport activity by supporting proton efflux to control proton extrusion and homeostasis in chloroplasts in a light-dependent manner to modulate photosynthesis. Prevents excessive induction of non-photochemical quenching (NPQ) under continuous-light conditions. Indirectly promotes efficient inorganic carbon uptake into chloroplasts. This is Potassium/proton antiporter CemA from Arabis hirsuta (Hairy rock-cress).